The following is an 89-amino-acid chain: Small ribosomal subunit protein uS15 (89 aa).

The protein belongs to the universal ribosomal protein uS15 family. As to quaternary structure, part of the 30S ribosomal subunit. Forms a bridge to the 50S subunit in the 70S ribosome, contacting the 23S rRNA.

Its function is as follows. One of the primary rRNA binding proteins, it binds directly to 16S rRNA where it helps nucleate assembly of the platform of the 30S subunit by binding and bridging several RNA helices of the 16S rRNA. Forms an intersubunit bridge (bridge B4) with the 23S rRNA of the 50S subunit in the ribosome. This Leuconostoc citreum (strain KM20) protein is Small ribosomal subunit protein uS15.